Reading from the N-terminus, the 259-residue chain is MNLLEKTRKINAMLQNAAGKPVNFKEMAETLCEVIEANVFVLSRRGKLLGFAIKQTIENERMKKMLADRQFPEEYTKNLFNITETSPNLDINSEYTAFPVENKDLFKNGLTTIVPIIGGGERLGTLILSRLDKEFHDDDLILAEYGATVVGMEILREKAEEIEEEARSKAVVQMAISSLSYSELEAIEHIFEELDGTEGLLVASKIADRVGITRSVIVNALRKLESAGVIESRSLGMKGTYIKVLNDKFLTELEKLKHH.

The interval 1-155 (MNLLEKTRKI…GATVVGMEIL (155 aa)) is GAF domain. Positions 203 to 222 (ASKIADRVGITRSVIVNALR) form a DNA-binding region, H-T-H motif. Ser-215 carries the post-translational modification Phosphoserine.

It belongs to the CodY family.

It localises to the cytoplasm. Its function is as follows. DNA-binding global transcriptional regulator which is involved in the adaptive response to starvation and acts by directly or indirectly controlling the expression of numerous genes in response to nutrient availability. During rapid exponential growth, CodY is highly active and represses genes whose products allow adaptation to nutrient depletion. In Anoxybacillus flavithermus (strain DSM 21510 / WK1), this protein is Global transcriptional regulator CodY.